A 405-amino-acid chain; its full sequence is Tyrosine--tRNA ligase (405 aa).

Tyrosine 35 lines the L-tyrosine pocket. The 'HIGH' region signature appears at 40-49; sequence ATSSSLHIGH. L-tyrosine-binding residues include tyrosine 166 and glutamine 170. Positions 226–230 match the 'KMSKS' region motif; the sequence is KMGKS. Lysine 229 contributes to the ATP binding site. In terms of domain architecture, S4 RNA-binding spans 340 to 404; the sequence is VLLINLMLDS…VGKKKFLRIV (65 aa).

This sequence belongs to the class-I aminoacyl-tRNA synthetase family. TyrS type 1 subfamily. Homodimer.

Its subcellular location is the cytoplasm. It catalyses the reaction tRNA(Tyr) + L-tyrosine + ATP = L-tyrosyl-tRNA(Tyr) + AMP + diphosphate + H(+). Its function is as follows. Catalyzes the attachment of tyrosine to tRNA(Tyr) in a two-step reaction: tyrosine is first activated by ATP to form Tyr-AMP and then transferred to the acceptor end of tRNA(Tyr). The polypeptide is Tyrosine--tRNA ligase (Borreliella afzelii (strain PKo) (Borrelia afzelii)).